A 525-amino-acid polypeptide reads, in one-letter code: G patch domain-containing protein 3 (525 aa).

The interval 264-316 (YLADIPASPCGEPEEEVGKEEEEESHSDEDDDRGEEWERHEALHEDVTGQERT) is disordered. Positions 275 to 298 (EPEEEVGKEEEEESHSDEDDDRGE) are enriched in acidic residues. Residues 299–316 (EWERHEALHEDVTGQERT) show a composition bias toward basic and acidic residues. The G-patch domain maps to 410-458 (TKGIGRKVMERQGWAEGQGLGCRCSGVPEALDSDGQHPRCKRGLGYHGE).

In terms of assembly, interacts with mitochondrial MAVS; the interaction is markedly increased upon viral infection. In terms of tissue distribution, expressed in ocular tissues including retinal pigment epithelium, cornea, ciliary muscle and non-pigmented ciliary epithelium. Also expressed in optic nerve, cartilage, skin and lymph node.

It localises to the nucleus. It is found in the cytoplasm. In terms of biological role, involved in transcriptional regulation. It is able to activate transcription from the CXCR4 promoter and therefore it might control neural crest cell migration involved in ocular and craniofacial development. Is a negative regulator of immune antiviral response, acting via down-regulation of RIG-I-like receptors signaling and inhibition of type I interferon production. The control mechanism involves interaction with mitochondrial MAVS and inhibition of MAVS assembly with downstream proteins implicated in antiviral response, such as TBK1 and TRAF6. This is G patch domain-containing protein 3 (GPATCH3) from Homo sapiens (Human).